An 81-amino-acid chain; its full sequence is Protein Vpu (81 aa).

Over Met1–Val7 the chain is Extracellular. Residues Ala8–Ile28 traverse the membrane as a helical segment. Topologically, residues Glu29–Leu81 are cytoplasmic. Residues Glu50–Leu81 form a disordered region. Residues Asn53–Glu63 show a composition bias toward acidic residues. At Ser57 the chain carries Phosphoserine; by host CK2.

Belongs to the HIV-1 VPU protein family. Homopentamer. Interacts with host CD4 and BRTC; these interactions induce proteasomal degradation of CD4. Interacts with host BST2; this interaction leads to the degradation of host BST2. Interacts with host FBXW11. Interacts with host AP1M1; this interaction plays a role in the mistrafficking and subsequent degradation of host BST2. Interacts with host RANBP2; this interaction allows Vpu to down-regulate host BLM sumoylation. In terms of processing, phosphorylated by host CK2. This phosphorylation is necessary for interaction with human BTRC and degradation of CD4.

Its subcellular location is the host membrane. With respect to regulation, ion channel activity is inhibited by hexamethylene amiloride in vitro. Its function is as follows. Enhances virion budding by targeting host CD4 and Tetherin/BST2 to proteasome degradation. Degradation of CD4 prevents any unwanted premature interactions between viral Env and its host receptor CD4 in the endoplasmic reticulum. Degradation of antiretroviral protein Tetherin/BST2 is important for virion budding, as BST2 tethers new viral particles to the host cell membrane. Mechanistically, Vpu bridges either CD4 or BST2 to BTRC, a substrate recognition subunit of the Skp1/Cullin/F-box protein E3 ubiquitin ligase, induces their ubiquitination and subsequent proteasomal degradation. The alteration of the E3 ligase specificity by Vpu seems to promote the degradation of host IKBKB, leading to NF-kappa-B down-regulation and subsequent apoptosis. Acts as a viroporin that forms an oligomeric ion channel in membranes. Modulates the host DNA repair mechanisms to promote degradation of nuclear viral cDNA in cells that are already productively infected in order to suppress immune sensing and proviral hyper-integration (superinfection). Manipulates PML-NBs and modulates SUMOylation of host BLM protein thereby enhancing its DNA-end processing activity toward viral unintegrated linear DNA. Also inhibits RAD52-mediated homologous repair of viral cDNA, preventing the generation of dead-end circular forms of single copies of the long terminal repeat and permitting sustained nucleolytic attack. This is Protein Vpu from Homo sapiens (Human).